A 212-amino-acid polypeptide reads, in one-letter code: HTH-type transcriptional regulator RutR (212 aa).

The region spanning 17-77 is the HTH tetR-type domain; it reads SAKKKAILSA…AVLRQILDIW (61 aa). Positions 39–58 form a DNA-binding region, H-T-H motif; that stretch reads TRLEQIAELAGVSKTNLLYY.

As to quaternary structure, homodimer.

In terms of biological role, master transcription regulator which represses the degradation of pyrimidines (rutABCDEFG) and purines (gcl operon) for maintenance of metabolic balance between pyrimidines and purines. It also regulates the synthesis of pyrimidine nucleotides and arginine from glutamine (carAB) and the supply of glutamate (gadABWX). The polypeptide is HTH-type transcriptional regulator RutR (rutR) (Escherichia coli O6:H1 (strain CFT073 / ATCC 700928 / UPEC)).